The sequence spans 600 residues: Elongation factor 4 (600 aa).

The 183-residue stretch at S4–S186 folds into the tr-type G domain. GTP-binding positions include D16 to T21 and N133 to D136.

Belongs to the TRAFAC class translation factor GTPase superfamily. Classic translation factor GTPase family. LepA subfamily.

It localises to the cell membrane. It catalyses the reaction GTP + H2O = GDP + phosphate + H(+). Required for accurate and efficient protein synthesis under certain stress conditions. May act as a fidelity factor of the translation reaction, by catalyzing a one-codon backward translocation of tRNAs on improperly translocated ribosomes. Back-translocation proceeds from a post-translocation (POST) complex to a pre-translocation (PRE) complex, thus giving elongation factor G a second chance to translocate the tRNAs correctly. Binds to ribosomes in a GTP-dependent manner. The sequence is that of Elongation factor 4 from Mycoplasma capricolum subsp. capricolum (strain California kid / ATCC 27343 / NCTC 10154).